A 668-amino-acid chain; its full sequence is Potassium voltage-gated channel subfamily KQT member 1 (668 aa).

The Cytoplasmic segment spans residues 1 to 119 (MDTASSPPSA…YNFLERPTGW (119 aa)). A Phosphoserine; by PKA modification is found at serine 27. Residues 120–141 (KCFVYHFTVFLIVLVCLIFSVL) form a helical membrane-spanning segment. At 142-152 (STIEQYAALAT) the chain is on the extracellular side. A helical membrane pass occupies residues 153–175 (GTLFWMEIVLVVFFGTEYVVRLW). Over 176-191 (SAGCRSKYVGIWGRLR) the chain is Cytoplasmic. A helical transmembrane segment spans residues 192–217 (FARKPISIIDLIVVVASMVVLCVGSK). At 218-225 (GQVFATSA) the chain is on the extracellular side. Residues 226-241 (IRGIRFLQILRMLHVD) form a helical; Voltage-sensor membrane-spanning segment. Residues 237 to 245 (MLHVDRQGG) form an interaction with KCNE3 region. Topologically, residues 242–259 (RQGGTWRLLGSVVFIHRQ) are cytoplasmic. Residue glutamine 243 participates in a 1,2-diacyl-sn-glycero-3-phospho-(1D-myo-inositol-4,5-bisphosphate) binding. A helical membrane pass occupies residues 260–282 (ELITTLYIGFLGLIFSSYFVYLA). At 283–298 (EKDAVNESGRIEFGSY) the chain is on the extracellular side. A glycan (N-linked (GlcNAc...) asparagine) is linked at asparagine 288. Positions 299–319 (ADALWWGVVTVTTIGYGDKVP) form an intramembrane region, pore-forming. The Extracellular portion of the chain corresponds to 320–321 (QT). A helical transmembrane segment spans residues 322 to 347 (WVGKTIASCFSVFAISFFALPAGILG). Topologically, residues 348–668 (SGFALKVQQK…VPQTGPDEGS (321 aa)) are cytoplasmic. The tract at residues 369–381 (AAASLIQTAWRCY) is interaction with CALM. Residues serine 406 and serine 408 each carry the phosphoserine modification. Residues 514–528 (KVIRRMQYFVAKKKF) are interaction with CALM; calcium-dependent. The tract at residues 534-571 (PYDVRDVIEQYSQGHLNLMVRIKELQRRLDQSIGKPSL) is interaction with KCNE1 C-terminus. Residues 584–620 (SNTIGARLNRVEDKVTQLDQRLVIITDMLHQLLSMQQ) adopt a coiled-coil conformation. The tract at residues 587 to 615 (IGARLNRVEDKVTQLDQRLVIITDMLHQL) is interaction with AKAP9. The tract at residues 588–619 (GARLNRVEDKVTQLDQRLVIITDMLHQLLSMQ) is C-terminal assembly domain (tetramerization).

This sequence belongs to the potassium channel family. KQT (TC 1.A.1.15) subfamily. Kv7.1/KCNQ1 sub-subfamily. As to quaternary structure, tetramer. Heterotetramer with KCNE1; form the native cardiac channel I(Ks) which increases the amplitude and slows down the activation kinetics of outward potassium current and targets to the membrane raft. Interacts (via C-terminus) with CALM; forms a heterooctameric structure (with 4:4 KCNQ1:CALM stoichiometry) in a calcium-independent manner. Interacts with AKAP9; targets protein kinase A (PKA) catalytic and regulatory subunits and protein phosphatase 1 (PP1) to the KCNQ1-KCNE1 complex, allowing PKA-mediated phosphorylation and increase of delayed rectifier potassium channel activity. Interacts with KCNE2; form an heterooligomer complex that targets to the membrane raft and leading to currents with an apparently instantaneous activation, a rapid deactivation process and a linear current-voltage relationship and decreases the amplitude of the outward current. Interacts with AP2M1; mediates estrogen-induced internalization via clathrin-coated vesicles. Interacts with NEDD4L; promotes internalization and decreases I(Ks) currents. Interacts with USP2; counteracts the NEDD4L-specific down-regulation of I(Ks) and restore plasma membrane localization. Heterotetramer with KCNQ5; has a voltage-gated potassium channel activity. Interacts with KCNE3; four KCNE3 molecules are bound to one KCNQ1 tetramer (4:4 KCNQ1:KCNE3 stoichiometry); alters membrane raft localization; affects KCNQ1 structure and gating properties. Interacts with KCNE4; impairs KCNQ1 localization in lipid rafts and inhibits voltage-gated potassium channel activity. Interacts with KCNE5; impairs KCNQ1 localization in lipid rafts and only conducts current upon strong and continued depolarization. Interacts with SLC5A3; forms coregulatory channel-transporter complexes that modulate Na(+)-coupled myo-inositol influx through the transporter. Post-translationally, phosphorylation at Ser-27 by PKA; increases delayed rectifier potassium channel activity of the KCNQ1-KCNE1 complex through a macromolecular complex that includes PKA, PP1, and the targeting protein AKAP9. Ubiquitinated by NEDD4L; promotes internalization. The ubiquitinylated form is internalized through a clathrin-mediated endocytosis by interacting with AP2M1 and is recycled back to the cell membrane via RAB4A and RAB11A. In terms of processing, deubiquitinated by USP2; counteracts the NEDD4L-specific down-regulation of I(Ks) and restores the membrane localization. As to expression, expressed in heart, kidney and salivary glands. Detected in the cochlea. Almost undetectable in brain, skeletal muscle and liver. Widely expressed in embryonic and neonatal tissues. Expressed in choroid plexus epithelium (at protein level).

The protein resides in the cell membrane. The protein localises to the cytoplasmic vesicle membrane. Its subcellular location is the early endosome. It is found in the membrane raft. It localises to the endoplasmic reticulum. The protein resides in the basolateral cell membrane. The protein localises to the apical cell membrane. It catalyses the reaction K(+)(in) = K(+)(out). PIP2 molecule is essential to activate KCNQ channels by inducing the coupling of the voltage-sensing domain (VSD) and the pore-forming domain (PD). Upon channel activation, PIP2 disrupts the VSD-calmodulin/CALM interactions, causing the release of CALM from the VSD which triggers the opening of the gate. Calcium potentiates KCNQ1 channel current through calcium-bound CALM. Calcium-bound CALM competes with PIP2 to stabilize the channel open state. In terms of biological role, pore-forming subunit of the voltage-gated potassium (Kv) channel involved in the regulation of cardiomyocyte excitability and important in normal development and functions of myocardium, inner ear, stomach and colon. Associates with KCNE beta subunits that modulates current kinetics. Induces a voltage-dependent by rapidly activating and slowly deactivating potassium-selective outward current. Also promotes a delayed voltage activated potassium current showing outward rectification characteristic. During beta-adrenergic receptor stimulation participates in cardiac increases the amplitude and slows down the activation kinetics of outward potassium current I(Ks). Muscarinic agonist oxotremorine-M strongly suppresses KCNQ1/KCNE1 current. When associated with KCNE3, forms the potassium channel that is important for cyclic AMP-stimulated intestinal secretion of chloride ions. This interaction with KCNE3 is reduced by 17beta-estradiol, resulting in the reduction of currents. During conditions of increased substrate load, maintains the driving force for proximal tubular and intestinal sodium ions absorption, gastric acid secretion, and cAMP-induced jejunal chloride ions secretion. Allows the provision of potassium ions to the luminal membrane of the secretory canaliculus in the resting state as well as during stimulated acid secretion. When associated with KCNE2, forms a heterooligomer complex leading to currents with an apparently instantaneous activation, a rapid deactivation process and a linear current-voltage relationship and decreases the amplitude of the outward current. When associated with KCNE4, inhibits voltage-gated potassium channel activity. When associated with KCNE5, this complex only conducts current upon strong and continued depolarization. Also forms a heterotetramer with KCNQ5; has a voltage-gated potassium channel activity. Binds with phosphatidylinositol 4,5-bisphosphate. KCNQ1-KCNE2 channel associates with Na(+)-coupled myo-inositol symporter in the apical membrane of choroid plexus epithelium and regulates the myo-inositol gradient between blood and cerebrospinal fluid with an impact on neuron excitability. This is Potassium voltage-gated channel subfamily KQT member 1 from Mus musculus (Mouse).